Here is a 439-residue protein sequence, read N- to C-terminus: Adenylosuccinate synthetase (439 aa).

GTP-binding positions include 25-31 (GDEGKGK), 53-55 (GHT), and lysine 62. Aspartate 26 functions as the Proton acceptor in the catalytic mechanism. Mg(2+)-binding residues include aspartate 26 and glycine 53. Residues 26 to 29 (DEGK) and 51 to 54 (NAGH) each bind IMP. Catalysis depends on histidine 54, which acts as the Proton donor. IMP is bound by residues threonine 141, arginine 155, asparagine 232, and threonine 247. Residue threonine 307 coordinates GTP. 307 to 313 (TTTKRPR) serves as a coordination point for substrate. Arginine 311 serves as a coordination point for IMP. GTP-binding positions include arginine 313, 339–341 (KLD), and 425–427 (GVG).

Belongs to the adenylosuccinate synthetase family. Homodimer. The cofactor is Mg(2+).

It is found in the cytoplasm. The enzyme catalyses IMP + L-aspartate + GTP = N(6)-(1,2-dicarboxyethyl)-AMP + GDP + phosphate + 2 H(+). It functions in the pathway purine metabolism; AMP biosynthesis via de novo pathway; AMP from IMP: step 1/2. Plays an important role in the salvage pathway for purine nucleotide biosynthesis. Catalyzes the first commited step in the biosynthesis of AMP from IMP. In Plasmodium berghei (strain Anka), this protein is Adenylosuccinate synthetase (ADSS).